A 567-amino-acid polypeptide reads, in one-letter code: Proline--tRNA ligase (567 aa).

This sequence belongs to the class-II aminoacyl-tRNA synthetase family. ProS type 1 subfamily. As to quaternary structure, homodimer.

Its subcellular location is the cytoplasm. The enzyme catalyses tRNA(Pro) + L-proline + ATP = L-prolyl-tRNA(Pro) + AMP + diphosphate. Its function is as follows. Catalyzes the attachment of proline to tRNA(Pro) in a two-step reaction: proline is first activated by ATP to form Pro-AMP and then transferred to the acceptor end of tRNA(Pro). As ProRS can inadvertently accommodate and process non-cognate amino acids such as alanine and cysteine, to avoid such errors it has two additional distinct editing activities against alanine. One activity is designated as 'pretransfer' editing and involves the tRNA(Pro)-independent hydrolysis of activated Ala-AMP. The other activity is designated 'posttransfer' editing and involves deacylation of mischarged Ala-tRNA(Pro). The misacylated Cys-tRNA(Pro) is not edited by ProRS. The sequence is that of Proline--tRNA ligase from Campylobacter curvus (strain 525.92).